Consider the following 176-residue polypeptide: ATP synthase subunit delta (176 aa).

The protein belongs to the ATPase delta chain family. F-type ATPases have 2 components, F(1) - the catalytic core - and F(0) - the membrane proton channel. F(1) has five subunits: alpha(3), beta(3), gamma(1), delta(1), epsilon(1). F(0) has three main subunits: a(1), b(2) and c(10-14). The alpha and beta chains form an alternating ring which encloses part of the gamma chain. F(1) is attached to F(0) by a central stalk formed by the gamma and epsilon chains, while a peripheral stalk is formed by the delta and b chains.

Its subcellular location is the cell inner membrane. Its function is as follows. F(1)F(0) ATP synthase produces ATP from ADP in the presence of a proton or sodium gradient. F-type ATPases consist of two structural domains, F(1) containing the extramembraneous catalytic core and F(0) containing the membrane proton channel, linked together by a central stalk and a peripheral stalk. During catalysis, ATP synthesis in the catalytic domain of F(1) is coupled via a rotary mechanism of the central stalk subunits to proton translocation. This protein is part of the stalk that links CF(0) to CF(1). It either transmits conformational changes from CF(0) to CF(1) or is implicated in proton conduction. This Aliarcobacter butzleri (strain RM4018) (Arcobacter butzleri) protein is ATP synthase subunit delta.